The following is a 257-amino-acid chain: Acetylglutamate kinase (257 aa).

Substrate is bound by residues 43–44 (GG), Arg-65, and Asn-157. ATP-binding positions include 180–185 (DVSGIL) and 208–210 (IIT).

This sequence belongs to the acetylglutamate kinase family. ArgB subfamily. In terms of assembly, homodimer.

The protein localises to the cytoplasm. The catalysed reaction is N-acetyl-L-glutamate + ATP = N-acetyl-L-glutamyl 5-phosphate + ADP. The protein operates within amino-acid biosynthesis; L-arginine biosynthesis; N(2)-acetyl-L-ornithine from L-glutamate: step 2/4. In terms of biological role, catalyzes the ATP-dependent phosphorylation of N-acetyl-L-glutamate. The sequence is that of Acetylglutamate kinase from Edwardsiella ictaluri (strain 93-146).